The following is a 69-amino-acid chain: NAD(P)H-quinone oxidoreductase subunit O (69 aa).

Belongs to the complex I NdhO subunit family. NDH-1 can be composed of about 15 different subunits; different subcomplexes with different compositions have been identified which probably have different functions.

The protein localises to the cellular thylakoid membrane. It carries out the reaction a plastoquinone + NADH + (n+1) H(+)(in) = a plastoquinol + NAD(+) + n H(+)(out). The catalysed reaction is a plastoquinone + NADPH + (n+1) H(+)(in) = a plastoquinol + NADP(+) + n H(+)(out). Functionally, NDH-1 shuttles electrons from an unknown electron donor, via FMN and iron-sulfur (Fe-S) centers, to quinones in the respiratory and/or the photosynthetic chain. The immediate electron acceptor for the enzyme in this species is believed to be plastoquinone. Couples the redox reaction to proton translocation, and thus conserves the redox energy in a proton gradient. Cyanobacterial NDH-1 also plays a role in inorganic carbon-concentration. The chain is NAD(P)H-quinone oxidoreductase subunit O from Acaryochloris marina (strain MBIC 11017).